We begin with the raw amino-acid sequence, 32 residues long: Trypsin inhibitor 4 (32 aa).

3 disulfides stabilise this stretch: C6–C23, C13–C25, and C19–C31.

It belongs to the protease inhibitor I7 (squash-type serine protease inhibitor) family.

It localises to the secreted. Its function is as follows. Inhibits trypsin. This is Trypsin inhibitor 4 from Cucurbita maxima (Pumpkin).